Consider the following 271-residue polypeptide: p-hydroxybenzoate hydroxylase transcriptional activator (271 aa).

The region spanning Ile23 to His83 is the HTH iclR-type domain. Residues Val45–Lys64 constitute a DNA-binding region (H-T-H motif). The IclR-ED domain maps to Leu98–Val271.

In terms of biological role, positive regulator of the pobA gene for p-hydroxybenzoate hydroxylase. The protein is p-hydroxybenzoate hydroxylase transcriptional activator (pobR) of Acinetobacter baylyi (strain ATCC 33305 / BD413 / ADP1).